Reading from the N-terminus, the 427-residue chain is Trigger factor (427 aa).

In terms of domain architecture, PPIase FKBP-type spans 163-248; that stretch reads GDTVVIDFVG…VNEVKAKELP (86 aa).

The protein belongs to the FKBP-type PPIase family. Tig subfamily.

It localises to the cytoplasm. It catalyses the reaction [protein]-peptidylproline (omega=180) = [protein]-peptidylproline (omega=0). In terms of biological role, involved in protein export. Acts as a chaperone by maintaining the newly synthesized protein in an open conformation. Functions as a peptidyl-prolyl cis-trans isomerase. This is Trigger factor from Lactococcus lactis subsp. cremoris (strain MG1363).